Reading from the N-terminus, the 543-residue chain is Methionine--tRNA ligase (543 aa).

The short motif at 13–23 (PYANGPLHVGH) is the 'HIGH' region element. 4 residues coordinate Zn(2+): Cys145, Cys148, Cys158, and Cys161. The 'KMSKS' region motif lies at 334–338 (QFSKS). Lys337 lines the ATP pocket.

Belongs to the class-I aminoacyl-tRNA synthetase family. MetG type 1 subfamily. Zn(2+) serves as cofactor.

Its subcellular location is the cytoplasm. The catalysed reaction is tRNA(Met) + L-methionine + ATP = L-methionyl-tRNA(Met) + AMP + diphosphate. Is required not only for elongation of protein synthesis but also for the initiation of all mRNA translation through initiator tRNA(fMet) aminoacylation. This chain is Methionine--tRNA ligase, found in Thermoplasma volcanium (strain ATCC 51530 / DSM 4299 / JCM 9571 / NBRC 15438 / GSS1).